A 345-amino-acid chain; its full sequence is N-acetyl-gamma-glutamyl-phosphate reductase (345 aa).

The active site involves C149.

It belongs to the NAGSA dehydrogenase family. Type 1 subfamily.

It is found in the cytoplasm. It carries out the reaction N-acetyl-L-glutamate 5-semialdehyde + phosphate + NADP(+) = N-acetyl-L-glutamyl 5-phosphate + NADPH + H(+). The protein operates within amino-acid biosynthesis; L-arginine biosynthesis; N(2)-acetyl-L-ornithine from L-glutamate: step 3/4. In terms of biological role, catalyzes the NADPH-dependent reduction of N-acetyl-5-glutamyl phosphate to yield N-acetyl-L-glutamate 5-semialdehyde. The protein is N-acetyl-gamma-glutamyl-phosphate reductase of Bacillus subtilis (strain 168).